The primary structure comprises 390 residues: GTPase Obg (390 aa).

One can recognise an Obg domain in the interval 1–159 (MKFVDEASIL…RDLMLELMLL (159 aa)). The interval 127-147 (NTRFKSSVNRTPRQKTMGTPG) is disordered. Polar residues predominate over residues 129–143 (RFKSSVNRTPRQKTM). Residues 160-333 (ADVGMLGMPN…LCWDVMTFII (174 aa)) form the OBG-type G domain. GTP is bound by residues 166-173 (GMPNAGKS), 191-195 (FTTLV), 213-216 (DIPG), 283-286 (NKID), and 314-316 (SAA). The Mg(2+) site is built by Ser173 and Thr193.

It belongs to the TRAFAC class OBG-HflX-like GTPase superfamily. OBG GTPase family. In terms of assembly, monomer. Mg(2+) is required as a cofactor.

It localises to the cytoplasm. An essential GTPase which binds GTP, GDP and possibly (p)ppGpp with moderate affinity, with high nucleotide exchange rates and a fairly low GTP hydrolysis rate. Plays a role in control of the cell cycle, stress response, ribosome biogenesis and in those bacteria that undergo differentiation, in morphogenesis control. The sequence is that of GTPase Obg from Citrobacter koseri (strain ATCC BAA-895 / CDC 4225-83 / SGSC4696).